We begin with the raw amino-acid sequence, 165 residues long: Phosphopantetheine adenylyltransferase (165 aa).

Residue serine 10 participates in substrate binding. ATP-binding positions include 10 to 11 and histidine 18; that span reads SF. Substrate contacts are provided by lysine 42, threonine 79, and arginine 93. ATP-binding positions include 94-96, glutamate 104, and 129-135; these read GLR and VRPITAT.

This sequence belongs to the bacterial CoaD family. Homohexamer. It depends on Mg(2+) as a cofactor.

The protein localises to the cytoplasm. The enzyme catalyses (R)-4'-phosphopantetheine + ATP + H(+) = 3'-dephospho-CoA + diphosphate. Its pathway is cofactor biosynthesis; coenzyme A biosynthesis; CoA from (R)-pantothenate: step 4/5. In terms of biological role, reversibly transfers an adenylyl group from ATP to 4'-phosphopantetheine, yielding dephospho-CoA (dPCoA) and pyrophosphate. The chain is Phosphopantetheine adenylyltransferase from Nitrobacter hamburgensis (strain DSM 10229 / NCIMB 13809 / X14).